The following is a 370-amino-acid chain: WAT1-related protein At1g44800 (370 aa).

The next 10 membrane-spanning stretches (helical) occupy residues 11-31, 41-61, 67-87, 102-122, 142-162, 182-202, 216-236, 252-272, 278-298, and 303-323; these read PILA…ITMV, VLAT…ALMF, PKMT…EPLM, SYTS…ALIF, VITV…IEIV, WVLG…FFIL, LVTL…LIMV, AAVY…SIVI, VFTT…GALV, and IHLG…SVVW. 2 EamA domains span residues 23–143 and 195–322; these read AGMY…GTVI and TWAA…YSVV.

This sequence belongs to the drug/metabolite transporter (DMT) superfamily. Plant drug/metabolite exporter (P-DME) (TC 2.A.7.4) family.

The protein resides in the membrane. In Arabidopsis thaliana (Mouse-ear cress), this protein is WAT1-related protein At1g44800.